Here is an 83-residue protein sequence, read N- to C-terminus: Small ribosomal subunit protein bS18 (83 aa).

Belongs to the bacterial ribosomal protein bS18 family. Part of the 30S ribosomal subunit. Forms a tight heterodimer with protein bS6.

Binds as a heterodimer with protein bS6 to the central domain of the 16S rRNA, where it helps stabilize the platform of the 30S subunit. This chain is Small ribosomal subunit protein bS18, found in Methylobacterium sp. (strain 4-46).